Consider the following 91-residue polypeptide: Small ribosomal subunit protein bS16 (91 aa).

Belongs to the bacterial ribosomal protein bS16 family.

This chain is Small ribosomal subunit protein bS16, found in Phytoplasma australiense.